A 1179-amino-acid polypeptide reads, in one-letter code: Integrin alpha-7 (1179 aa).

The N-terminal stretch at 1–33 (MARIPRCDFLRPPGIYYLITSLLAGLFLPPAIA) is a signal peptide. Residues 34–1076 (FNLDVMGAIR…YLDPMAVVVE (1043 aa)) are Extracellular-facing. FG-GAP repeat units follow at residues 38–103 (VMGA…ETDC), 110–175 (RGAN…IRDE), 185–238 (EGRP…SPDL), 292–349 (DRLT…ATRL), 350–411 (IPEV…HWAD), 412–467 (ISPL…GVVV), and 471–530 (QVLE…IDPR). An N-linked (GlcNAc...) asparagine glycan is attached at Asn-86. Cystine bridges form between Cys-94–Cys-103, Cys-140–Cys-163, and Cys-184–Cys-197. The Ca(2+) site is built by Asp-372, Asn-374, Asp-376, Asp-380, Asp-434, Asn-436, Asp-438, Asp-442, Asp-492, Asp-494, Asn-496, Tyr-498, and Asp-500. Disulfide bonds link Cys-539–Cys-546, Cys-552–Cys-615, Cys-681–Cys-687, Cys-781–Cys-792, Cys-939–Cys-993, and Cys-999–Cys-1004. N-linked (GlcNAc...) asparagine glycosylation occurs at Asn-784. Over residues 952–961 (SRDRRRRELG) the composition is skewed to basic and acidic residues. Residues 952–978 (SRDRRRRELGQPEPQEPPEKVEPSTSW) form a disordered region. The N-linked (GlcNAc...) asparagine glycan is linked to Asn-988. N-linked (GlcNAc...) asparagine glycosylation is found at Asn-1023 and Asn-1043. The chain crosses the membrane as a helical span at residues 1077 to 1102 (GVPWWVILLGVLAGLLVLALLVLLLW). Residues 1103–1179 (KLGFFKRAKH…PDGHPVPATA (77 aa)) lie on the Cytoplasmic side of the membrane. The GFFKR motif signature appears at 1105–1109 (GFFKR). Positions 1134-1153 (KEEKTGTIQRSNWGNSQWEG) are disordered. The segment covering 1139 to 1152 (GTIQRSNWGNSQWE) has biased composition (polar residues). A run of 3 repeats spans residues 1155–1158 (DAHP), 1163–1166 (DWHP), and 1171–1174 (DGHP). The tract at residues 1155–1174 (DAHPILAADWHPELGPDGHP) is 3 X 4 AA repeats of D-X-H-P.

Belongs to the integrin alpha chain family. In terms of assembly, heterodimer of an alpha and a beta subunit. The alpha subunit is composed of a heavy and a light chain linked by a disulfide bond. Alpha-7 associates with beta-1. Interacts with COMP. Interacts (via C-terminus intracellular tail region) with CIB1; the interaction is stabilized/increased in a calcium- and magnesium-dependent manner. ADP-ribosylated on at least two sites of the extracellular domain in skeletal myotubes (in vitro). In terms of processing, no proteolytic cleavage to produce the 70 kDa form is seen due to the presence of a Gly instead of an arginine residue at position 647. In terms of tissue distribution, isoforms containing segment X2 are found in adult heart, lung and skeletal muscle. Isoforms containing segment X1 are expressed in adult heart, lung and in proliferating skeletal myoblasts but not in adult skeletal muscle. Isoforms containing segment a are exclusively found in skeletal muscle. Isoforms containing segment B are widely expressed. In muscle fibers isoforms containing segment A and B are expressed at myotendinous and neuromuscular junctions; isoforms containing segment C are expressed at neuromuscular junctions and at extrasynaptic sites.

It localises to the membrane. Its function is as follows. Integrin alpha-7/beta-1 is the primary laminin receptor on skeletal myoblasts and adult myofibers. During myogenic differentiation, it may induce changes in the shape and mobility of myoblasts, and facilitate their localization at laminin-rich sites of secondary fiber formation. Involved in the maintenance of the myofibers cytoarchitecture as well as for their anchorage, viability and functional integrity. Mice carrying a ITGA7 null allele are viable and fertile, but show progressive muscular dystrophy starting soon after birth, but with a distinct variability in different muscle types. Required to promote contractile phenotype acquisition in differentiated airway smooth muscle (ASM) cells. Acts as a Schwann cell receptor for laminin-2. Acts as a receptor of COMP and mediates its effect on vascular smooth muscle cells (VSMCs) maturation. This Mus musculus (Mouse) protein is Integrin alpha-7 (Itga7).